Reading from the N-terminus, the 792-residue chain is Pentatricopeptide repeat-containing protein At4g30700 (792 aa).

PPR repeat units follow at residues 51–81 (DISL…VQRP), 82–117 (DVFL…DLKP), 118–152 (NSST…GCDS), 153–183 (ELLL…MPEK), 184–218 (DTIL…SCTR), 220–254 (DTTT…GCYS), 255–285 (HDYV…FRKP), 286–320 (DIVA…GARL), 321–352 (RSST…NFLS), 353–383 (HASV…SPEK), 384–418 (SLPS…EFSP), 419–453 (NPVT…DFES), 454–484 (SIYV…MTKK), 485–519 (NEVT…GITP), 520–555 (TPVT…GFEP), and 556–586 (SVKH…MSIE). The tract at residues 591–666 (VWETLLGACR…APGYTLIEIG (76 aa)) is type E motif. The tract at residues 667–697 (ETPHVFTSGDQSHPQVKEIYEKLEKLEGKMR) is type E(+) motif. The segment at 698–792 (EAGYQPETEL…DGVCSCGDYW (95 aa)) is type DYW motif.

Belongs to the PPR family. PCMP-H subfamily.

This Arabidopsis thaliana (Mouse-ear cress) protein is Pentatricopeptide repeat-containing protein At4g30700 (DYW9).